Reading from the N-terminus, the 160-residue chain is Transcription antitermination protein NusB (160 aa).

The protein belongs to the NusB family.

Functionally, involved in transcription antitermination. Required for transcription of ribosomal RNA (rRNA) genes. Binds specifically to the boxA antiterminator sequence of the ribosomal RNA (rrn) operons. The chain is Transcription antitermination protein NusB from Rhizobium etli (strain ATCC 51251 / DSM 11541 / JCM 21823 / NBRC 15573 / CFN 42).